A 424-amino-acid polypeptide reads, in one-letter code: Choline-phosphate cytidylyltransferase (424 aa).

Residues 1 to 70 (MANPTTGKSS…RKRRRLTKEF (70 aa)) form a disordered region. A compositionally biased stretch (low complexity) spans 14 to 24 (KLSNSSLSNLF). A Phosphoserine modification is found at Ser16. Acidic residues predominate over residues 35 to 44 (ETEEQDNEDK). The segment covering 45-55 (DESKNQDENKD) has biased composition (basic and acidic residues). Phosphothreonine is present on Thr59. CTP is bound by residues 111 to 119 (VFDLFHLGH) and Lys149. Lys149 and Trp178 together coordinate substrate. CTP-binding positions include 195-196 (HD), Tyr200, and 223-227 (RTNGV). A Phosphoserine modification is found at Ser346. The tract at residues 348–424 (ATEFANEFTG…LTQKKKQSAN (77 aa)) is disordered. Low complexity predominate over residues 381–398 (NSNNTNTNSDSDSNTNST). Ser401 bears the Phosphoserine; by CK2 mark.

Belongs to the cytidylyltransferase family.

It localises to the membrane. The enzyme catalyses phosphocholine + CTP + H(+) = CDP-choline + diphosphate. The protein operates within phospholipid metabolism; phosphatidylcholine biosynthesis; phosphatidylcholine from phosphocholine: step 1/2. Its function is as follows. Catalyzes the key rate-limiting step in the CDP-choline pathway for phosphatidylcholine biosynthesis. This chain is Choline-phosphate cytidylyltransferase (PCT1), found in Saccharomyces cerevisiae (strain ATCC 204508 / S288c) (Baker's yeast).